Consider the following 186-residue polypeptide: Elongation factor P (186 aa).

An N-alpha-linked (Rha) arginine glycan is attached at Arg-32.

This sequence belongs to the elongation factor P family. Post-translationally, glycosylated ar Arg-32 by EarP: arginine rhamnosylation is required for EF-P function and rescue of polyproline stalled ribosomes.

The protein localises to the cytoplasm. Its pathway is protein biosynthesis; polypeptide chain elongation. Involved in peptide bond synthesis. Stimulates efficient translation and peptide-bond synthesis on native or reconstituted 70S ribosomes in vitro. Probably functions indirectly by altering the affinity of the ribosome for aminoacyl-tRNA, thus increasing their reactivity as acceptors for peptidyl transferase. This Shewanella oneidensis (strain ATCC 700550 / JCM 31522 / CIP 106686 / LMG 19005 / NCIMB 14063 / MR-1) protein is Elongation factor P.